The sequence spans 298 residues: MLARSARLLHSAELAANAIRAASGAPATAAAAEASFPSTDDVAAKTKKTGNRIKTFEIYRFNPEAPGAKPTVQKFDVDLDQCGTMILDALIKIKNEVDPTLTFRRSCREGICGSCAMNIGGQNTLACICKIDSDTSKSTKIYPLPHMFVVKDLVPDMNLFYAQYASIQPWIQKKTPLTLGEKQMHQSVAERDRLDGLYECILCACCSTSCPSYWWNADKYLGPAVLMQAYRWVIDSRDDYATERLHRMHDSFSAFKCHTIMNCTKTCPKHLNPAKAIGEIKSLLTGFTSKPAAEPSAF.

The 2Fe-2S ferredoxin-type domain occupies tyrosine 59–methionine 147. Residues cysteine 107, cysteine 112, cysteine 115, and cysteine 127 each coordinate [2Fe-2S] cluster. Positions glutamate 190–tyrosine 220 constitute a 4Fe-4S ferredoxin-type domain. Positions 200, 203, and 206 each coordinate [4Fe-4S] cluster. [3Fe-4S] cluster is bound at residue cysteine 210. Tryptophan 215 is a binding site for a ubiquinone. The [3Fe-4S] cluster site is built by cysteine 257 and cysteine 263. A [4Fe-4S] cluster-binding site is contributed by cysteine 267.

It belongs to the succinate dehydrogenase/fumarate reductase iron-sulfur protein family. In terms of assembly, component of complex II composed of four subunits: a flavoprotein (FP), an iron-sulfur protein (IP), and a cytochrome b composed of a large and a small subunit. Requires [2Fe-2S] cluster as cofactor. It depends on [3Fe-4S] cluster as a cofactor. The cofactor is [4Fe-4S] cluster.

It is found in the mitochondrion inner membrane. The catalysed reaction is a quinone + succinate = fumarate + a quinol. The protein operates within carbohydrate metabolism; tricarboxylic acid cycle; fumarate from succinate (eukaryal route): step 1/1. In terms of biological role, iron-sulfur protein (IP) subunit of succinate dehydrogenase (SDH) that is involved in complex II of the mitochondrial electron transport chain and is responsible for transferring electrons from succinate to ubiquinone (coenzyme Q). The chain is Succinate dehydrogenase [ubiquinone] iron-sulfur subunit, mitochondrial (sdhb-1) from Caenorhabditis elegans.